Consider the following 406-residue polypeptide: Kelch domain-containing protein 2 (406 aa).

Kelch repeat units follow at residues 31–85 (ERSG…NTEG), 92–136 (SGSC…ERID), 148–207 (LGVW…AWSQ), 221–259 (HACA…NELI), 271–311 (HSLT…IQFN), and 322–359 (HTAC…IFSV).

Component of a CRL2(KLHDC2) E3 ubiquitin-protein ligase complex, also named ECS(KLHDC2) complex, composed of CUL2, Elongin BC (ELOB and ELOC), RBX1 and substrate-specific adapter KLHDC2. May form oligomers as a KLHDC2-ELOB-ELOC complex; this interaction is autoinhibitory for the E3 ligase complex as the substrate-binding site of KLHDC2 is blocked in the oligomer. Interacts with CREB3; interaction is direct and specific as it does not interact with CREB1, ATF4, ATF6, JUN, FOS, CEBPA or herpes simplex virus transactivator VP16. Autoubiquitinated by the CRL2(KLHDC2) E3 ligase complex.

It localises to the nucleus. It participates in protein modification; protein ubiquitination. In terms of biological role, substrate-recognition component of a Cul2-RING (CRL2) E3 ubiquitin-protein ligase complex of the DesCEND (destruction via C-end degrons) pathway, which recognizes a C-degron located at the extreme C terminus of target proteins, leading to their ubiquitination and degradation. The C-degron recognized by the DesCEND pathway is usually a motif of less than ten residues and can be present in full-length proteins, truncated proteins or proteolytically cleaved forms. The CRL2(KLHDC2) complex specifically recognizes proteins with a diglycine (Gly-Gly) at the C-terminus, leading to their ubiquitination and degradation. The CRL2(KLHDC2) complex mediates ubiquitination and degradation of truncated SELENOK and SELENOS selenoproteins produced by failed UGA/Sec decoding, which end with a diglycine. The CRL2(KLHDC2) complex also recognizes proteolytically cleaved proteins ending with Gly-Gly, such as the N-terminal fragment of USP1, leading to their degradation. May also act as an indirect repressor of CREB3-mediated transcription by interfering with CREB3-DNA-binding. The protein is Kelch domain-containing protein 2 of Rattus norvegicus (Rat).